The primary structure comprises 466 residues: Cysteine--tRNA ligase (466 aa).

Residue Cys29 participates in Zn(2+) binding. The 'HIGH' region motif lies at 31–41 (PTVYNYIHIGN). 3 residues coordinate Zn(2+): Cys209, His234, and Glu238. Positions 266–270 (KMSKS) match the 'KMSKS' region motif. Lys269 contacts ATP. Ser270 is modified (phosphoserine).

Belongs to the class-I aminoacyl-tRNA synthetase family. As to quaternary structure, monomer. Zn(2+) serves as cofactor.

It localises to the cytoplasm. It catalyses the reaction tRNA(Cys) + L-cysteine + ATP = L-cysteinyl-tRNA(Cys) + AMP + diphosphate. In Halalkalibacterium halodurans (strain ATCC BAA-125 / DSM 18197 / FERM 7344 / JCM 9153 / C-125) (Bacillus halodurans), this protein is Cysteine--tRNA ligase (cysS).